The chain runs to 130 residues: Small ribosomal subunit protein uS11 (130 aa).

The span at 1 to 15 shows a compositional bias: basic residues; sequence MARPTKKSGPRKQKR. The tract at residues 1–21 is disordered; it reads MARPTKKSGPRKQKRNVPSGV.

It belongs to the universal ribosomal protein uS11 family. In terms of assembly, part of the 30S ribosomal subunit. Interacts with proteins S7 and S18. Binds to IF-3.

Functionally, located on the platform of the 30S subunit, it bridges several disparate RNA helices of the 16S rRNA. Forms part of the Shine-Dalgarno cleft in the 70S ribosome. The sequence is that of Small ribosomal subunit protein uS11 from Synechococcus elongatus (strain ATCC 33912 / PCC 7942 / FACHB-805) (Anacystis nidulans R2).